The sequence spans 178 residues: Large ribosomal subunit protein bL17 (178 aa).

Basic and acidic residues predominate over residues 126–139 (DRARRVAASKKAEE). The segment at 126–178 (DRARRVAASKKAEEQAPAAEAEEQAPAAEAEAPAADAAAEAKADEAAEDKKDA) is disordered. The span at 140-163 (QAPAAEAEEQAPAAEAEAPAADAA) shows a compositional bias: low complexity. The segment covering 164-178 (AEAKADEAAEDKKDA) has biased composition (basic and acidic residues).

It belongs to the bacterial ribosomal protein bL17 family. In terms of assembly, part of the 50S ribosomal subunit. Contacts protein L32.

The protein is Large ribosomal subunit protein bL17 of Nocardia farcinica (strain IFM 10152).